The following is a 315-amino-acid chain: Putative serine/threonine-protein phosphatase PP2A-4 catalytic subunit (315 aa).

Residues D63, H65, D91, and N123 each coordinate Mn(2+). The active-site Proton donor is H124. Mn(2+) is bound by residues H173 and H247.

This sequence belongs to the PPP phosphatase family. PP-2A subfamily. It depends on Mn(2+) as a cofactor.

Its subcellular location is the cytoplasm. The catalysed reaction is O-phospho-L-seryl-[protein] + H2O = L-seryl-[protein] + phosphate. It catalyses the reaction O-phospho-L-threonyl-[protein] + H2O = L-threonyl-[protein] + phosphate. This Oryza sativa subsp. indica (Rice) protein is Putative serine/threonine-protein phosphatase PP2A-4 catalytic subunit (PP2A4).